The chain runs to 313 residues: Glutathione synthetase (313 aa).

One can recognise an ATP-grasp domain in the interval 125 to 309; sequence KLFVMDFTEL…IAAKIWDVIE (185 aa). 151 to 207 lines the ATP pocket; that stretch reads RAEHGAVVMKPLHGHGGAAVFRVLPQDINFGSLYDMFAVTFREPWVIQRFLPEVKHG. Glutamate 280 and asparagine 282 together coordinate Mg(2+).

Belongs to the prokaryotic GSH synthase family. Mg(2+) is required as a cofactor. Mn(2+) serves as cofactor.

It catalyses the reaction gamma-L-glutamyl-L-cysteine + glycine + ATP = glutathione + ADP + phosphate + H(+). The protein operates within sulfur metabolism; glutathione biosynthesis; glutathione from L-cysteine and L-glutamate: step 2/2. The sequence is that of Glutathione synthetase from Rhodopseudomonas palustris (strain ATCC BAA-98 / CGA009).